The primary structure comprises 1394 residues: DNA-directed RNA polymerase subunit beta' (1394 aa).

The Zn(2+) site is built by Cys71, Cys73, Cys86, and Cys89. Asp462, Asp464, and Asp466 together coordinate Mg(2+). The Zn(2+) site is built by Cys810, Cys884, Cys891, and Cys894.

Belongs to the RNA polymerase beta' chain family. As to quaternary structure, the RNAP catalytic core consists of 2 alpha, 1 beta, 1 beta' and 1 omega subunit. When a sigma factor is associated with the core the holoenzyme is formed, which can initiate transcription. Requires Mg(2+) as cofactor. Zn(2+) serves as cofactor.

The enzyme catalyses RNA(n) + a ribonucleoside 5'-triphosphate = RNA(n+1) + diphosphate. Its function is as follows. DNA-dependent RNA polymerase catalyzes the transcription of DNA into RNA using the four ribonucleoside triphosphates as substrates. This chain is DNA-directed RNA polymerase subunit beta', found in Caulobacter sp. (strain K31).